A 476-amino-acid polypeptide reads, in one-letter code: Cytosolic iron-sulfur assembly component 3 (476 aa).

A2 is modified (N-acetylalanine). [4Fe-4S] cluster is bound by residues C24, C71, C74, C77, C190, C246, C395, and C399.

The protein belongs to the NARF family. In terms of assembly, external component of the CIA complex. In the CIA complex, interacts directly with CIAO1 and MMS19.

Component of the cytosolic iron-sulfur protein assembly (CIA) complex, a multiprotein complex that mediates the incorporation of iron-sulfur cluster into extramitochondrial Fe/S proteins. Seems to negatively regulate the level of HIF1A expression, although this effect could be indirect. In Bos taurus (Bovine), this protein is Cytosolic iron-sulfur assembly component 3.